The primary structure comprises 765 residues: Transcription factor SKN7 (765 aa).

Residues 1-42 (MPPTNGEGGSQQPQQQQQQQQQQQQQQQQQQQQQQGGSGSSD) form a disordered region. A compositionally biased stretch (low complexity) spans 11-35 (QQPQQQQQQQQQQQQQQQQQQQQQQ). The segment at 40 to 145 (SSDFVRKLYK…NLDNIRRKAP (106 aa)) is DNA-binding domain. Residues 157-198 (FNASQQQIAALSESLQATQQQLQALQQQCYELEKTNRLLVSE) adopt a coiled-coil conformation. Positions 160 to 220 (SQQQIAALSE…QASNEIINHL (61 aa)) are hydrophobic repeat HR-A/B. Positions 371 to 391 (SSSQITPSQITPPPKDQMSSM) are disordered. Residues 398 to 514 (RVLLVEDDKT…NMSRLLRRHL (117 aa)) enclose the Response regulatory domain. D449 is modified (4-aspartylphosphate). The segment at 542-765 (TAGPATTGVG…PGVGVAGFVQ (224 aa)) is transactivation domain. Positions 550-564 (VGVGVAGAPSGGAHG) are enriched in gly residues. 2 disordered regions span residues 550-647 (VGVG…PAGL) and 686-765 (PGAM…GFVQ). Low complexity predominate over residues 569–584 (AQHQQGYAMAPPTTMQ). The span at 626-636 (QPPPPPTPTQP) shows a compositional bias: pro residues. 2 stretches are compositionally biased toward low complexity: residues 637-647 (SPTSAAPPAGL) and 699-715 (GVGH…AGAR). A compositionally biased stretch (gly residues) spans 755-765 (HPGVGVAGFVQ).

The protein belongs to the SKN7 family. In terms of assembly, homotrimer.

The protein resides in the nucleus. In terms of biological role, transcription factor that is part of a SLN1-YPD1-SKN7 two-component regulatory system, which controls gene expression in response to changes in the osmolarity of the extracellular environment. Under low osmotic conditions, phosphorylated and activated by the phosphorelay intermediate protein YPD1. Also activated in response to oxidative stress, independent on the two-component regulatory system. Regulates heat shock genes in response to oxidative stress and genes involved in cell wall integrity in response to osmotic changes. The sequence is that of Transcription factor SKN7 from Chaetomium thermophilum (strain DSM 1495 / CBS 144.50 / IMI 039719) (Thermochaetoides thermophila).